We begin with the raw amino-acid sequence, 471 residues long: Uronate isomerase (471 aa).

It belongs to the metallo-dependent hydrolases superfamily. Uronate isomerase family.

It carries out the reaction D-glucuronate = D-fructuronate. It catalyses the reaction aldehydo-D-galacturonate = keto-D-tagaturonate. It participates in carbohydrate metabolism; pentose and glucuronate interconversion. The sequence is that of Uronate isomerase from Latilactobacillus sakei subsp. sakei (strain 23K) (Lactobacillus sakei subsp. sakei).